Consider the following 631-residue polypeptide: Phosphomethylpyrimidine synthase (631 aa).

Substrate-binding positions include asparagine 239, methionine 268, tyrosine 297, histidine 333, 353–355 (SRG), 394–397 (DGLR), and glutamate 433. Zn(2+) is bound at residue histidine 437. Residue tyrosine 460 participates in substrate binding. Histidine 501 lines the Zn(2+) pocket. [4Fe-4S] cluster is bound by residues cysteine 581, cysteine 584, and cysteine 589.

It belongs to the ThiC family. As to quaternary structure, homodimer. It depends on [4Fe-4S] cluster as a cofactor.

It catalyses the reaction 5-amino-1-(5-phospho-beta-D-ribosyl)imidazole + S-adenosyl-L-methionine = 4-amino-2-methyl-5-(phosphooxymethyl)pyrimidine + CO + 5'-deoxyadenosine + formate + L-methionine + 3 H(+). It participates in cofactor biosynthesis; thiamine diphosphate biosynthesis. Catalyzes the synthesis of the hydroxymethylpyrimidine phosphate (HMP-P) moiety of thiamine from aminoimidazole ribotide (AIR) in a radical S-adenosyl-L-methionine (SAM)-dependent reaction. In Salmonella agona (strain SL483), this protein is Phosphomethylpyrimidine synthase.